Here is a 263-residue protein sequence, read N- to C-terminus: uncharacterized protein (263 aa).

Residues 1-22 (MRYLKRVVLYRIVMVLSVFIIG) form the signal peptide. Cys-23 carries the N-palmitoyl cysteine lipid modification. Cys-23 carries S-diacylglycerol cysteine lipidation.

Belongs to the staphylococcal tandem lipoprotein family.

It localises to the cell membrane. This is an uncharacterized protein from Staphylococcus aureus (strain bovine RF122 / ET3-1).